We begin with the raw amino-acid sequence, 551 residues long: Putative ABC transporter ATP-binding protein BA_3364/GBAA_3364/BAS3118 (551 aa).

2 consecutive ABC transporter domains span residues 5-243 and 293-525; these read AEIK…FRPF and LSAE…SINR. ATP contacts are provided by residues 39–46 and 327–334; these read GGSGSGKT and GKNGTGKS.

The protein belongs to the ABC transporter superfamily.

The protein localises to the cell membrane. Functionally, probably part of an ABC transporter complex. Responsible for energy coupling to the transport system. The polypeptide is Putative ABC transporter ATP-binding protein BA_3364/GBAA_3364/BAS3118 (Bacillus anthracis).